The primary structure comprises 544 residues: Inosine-5'-monophosphate dehydrogenase (544 aa).

CBS domains follow at residues 132 to 192 (FITD…PIKS) and 194 to 250 (MTTE…PYAS). NAD(+) is bound by residues 288–290 (DSS) and 338–340 (GMG). K(+)-binding residues include glycine 340 and glycine 342. Position 343 (serine 343) interacts with IMP. Cysteine 345 contributes to the K(+) binding site. Cysteine 345 serves as the catalytic Thioimidate intermediate. IMP contacts are provided by residues 378–380 (DGG), 401–402 (GG), and 425–429 (YRGMG). The active-site Proton acceptor is the arginine 458. Glutamine 470 is an IMP binding site. Glutamate 529, glycine 530, and glycine 531 together coordinate K(+).

This sequence belongs to the IMPDH/GMPR family. Homotetramer. The cofactor is K(+).

The protein resides in the cytoplasm. It catalyses the reaction IMP + NAD(+) + H2O = XMP + NADH + H(+). It participates in purine metabolism; XMP biosynthesis via de novo pathway; XMP from IMP: step 1/1. Its activity is regulated as follows. Mycophenolic acid (MPA) is a non-competitive inhibitor that prevents formation of the closed enzyme conformation by binding to the same site as the amobile flap. In contrast, mizoribine monophosphate (MZP) is a competitive inhibitor that induces the closed conformation. MPA is a potent inhibitor of mammalian IMPDHs but a poor inhibitor of the bacterial enzymes. MZP is a more potent inhibitor of bacterial IMPDH. Catalyzes the conversion of inosine 5'-phosphate (IMP) to xanthosine 5'-phosphate (XMP), the first committed and rate-limiting step in the de novo synthesis of guanine nucleotides, and therefore plays an important role in the regulation of cell growth. The chain is Inosine-5'-monophosphate dehydrogenase from Cryptococcus neoformans var. neoformans serotype D (strain JEC21 / ATCC MYA-565) (Filobasidiella neoformans).